The chain runs to 1217 residues: ATP-dependent helicase/nuclease subunit A (1217 aa).

The 466-residue stretch at 10-475 (VIWTDAQWQS…IDLSQNFRSR (466 aa)) folds into the UvrD-like helicase ATP-binding domain. 31-38 (AAAGSGKT) contacts ATP. The 311-residue stretch at 476-786 (KEVLSTTNYI…RMMTIHSSKG (311 aa)) folds into the UvrD-like helicase C-terminal domain.

This sequence belongs to the helicase family. AddA subfamily. In terms of assembly, heterodimer of AddA and AddB/RexB. Mg(2+) serves as cofactor.

The catalysed reaction is Couples ATP hydrolysis with the unwinding of duplex DNA by translocating in the 3'-5' direction.. It carries out the reaction ATP + H2O = ADP + phosphate + H(+). In terms of biological role, the heterodimer acts as both an ATP-dependent DNA helicase and an ATP-dependent, dual-direction single-stranded exonuclease. Recognizes the chi site generating a DNA molecule suitable for the initiation of homologous recombination. The AddA nuclease domain is required for chi fragment generation; this subunit has the helicase and 3' -&gt; 5' nuclease activities. The sequence is that of ATP-dependent helicase/nuclease subunit A from Staphylococcus aureus (strain NCTC 8325 / PS 47).